We begin with the raw amino-acid sequence, 140 residues long: Nucleoside diphosphate kinase (140 aa).

6 residues coordinate ATP: K9, F57, R85, T91, R102, and N112. The active-site Pros-phosphohistidine intermediate is the H115.

The protein belongs to the NDK family. In terms of assembly, homotetramer. Mg(2+) is required as a cofactor.

The protein localises to the cytoplasm. The catalysed reaction is a 2'-deoxyribonucleoside 5'-diphosphate + ATP = a 2'-deoxyribonucleoside 5'-triphosphate + ADP. It catalyses the reaction a ribonucleoside 5'-diphosphate + ATP = a ribonucleoside 5'-triphosphate + ADP. Functionally, major role in the synthesis of nucleoside triphosphates other than ATP. The ATP gamma phosphate is transferred to the NDP beta phosphate via a ping-pong mechanism, using a phosphorylated active-site intermediate. This chain is Nucleoside diphosphate kinase, found in Chlorobaculum tepidum (strain ATCC 49652 / DSM 12025 / NBRC 103806 / TLS) (Chlorobium tepidum).